The following is a 340-amino-acid chain: Short-chain dehydrogenase/reductase prx1 (340 aa).

NADP(+)-binding residues include Ile-60, Lys-84, Asp-104, Asn-131, and Lys-162. The active-site Proton donor is Ser-184. Positions 210 and 214 each coordinate NADP(+). Tyr-210 functions as the Proton acceptor in the catalytic mechanism. The Lowers pKa of active site Tyr role is filled by Lys-214.

The protein belongs to the short-chain dehydrogenases/reductases (SDR) family.

It participates in sesquiterpene biosynthesis. Functionally, short-chain dehydrogenase/reductase; part of the gene cluster that mediates the biosynthesis of PR-toxin, a bicyclic sesquiterpene belonging to the eremophilane class and acting as a mycotoxin. The first step of the pathway is catalyzed by the aristolochene synthase which performs the cyclization of trans,trans-farnesyl diphosphate (FPP) to the bicyclic sesquiterpene aristolochene. Following the formation of aristolochene, the non-oxygenated aristolochene is converted to the trioxygenated intermediate eremofortin B, via 7-epi-neopetasone. This conversion appears to involve three enzymes, a hydroxysterol oxidase-like enzyme, the quinone-oxidase prx3 that forms the quinone-type-structure in the bicyclic nucleus of aristolochene with the C8-oxo group and the C-3 hydroxyl group, and the P450 monooxygenase prx9 that introduces the epoxide at the double bond between carbons 1 and 2. No monoxy or dioxy-intermediates have been reported to be released to the broth, so these three early oxidative reactions may be coupled together. Eremofortin B is further oxidized by another P450 monooxygenase, that introduces a second epoxide between carbons 7 and 11 prior to acetylation to eremofortin A by the acetyltransferase prx11. The second epoxidation may be performed by a second P450 monooxygenase. After the acetylation step, eremofortin A is converted to eremofortin C and then to PR-toxin. First the conversion of eremofortin A to eremofortin C proceeds by oxidation of the side chain of the molecule at C-12 and is catalyzed by the short-chain oxidoreductase prx1. The cytochrome P450 monooxygenase prx8 also plays a role in this step. The primary alcohol formed at C-12 is finally oxidized by the short-chain alcohol dehydrogenase prx4 that forms PR-toxin. This is Short-chain dehydrogenase/reductase prx1 from Penicillium rubens (strain ATCC 28089 / DSM 1075 / NRRL 1951 / Wisconsin 54-1255) (Penicillium chrysogenum).